Reading from the N-terminus, the 163-residue chain is Calcium-binding protein I (163 aa).

3 EF-hand domains span residues 20 to 42 (DKNKDRQYSIDEIVQLLKKNSKN), 82 to 117 (KPEIDIESFLLRFDKNNDKMISHHELKTKLDELGCG), and 118 to 153 (NSKKTTDYVFEQIDTNKEGSLSYEDLEGFVKFLKQD). Ca(2+) contacts are provided by aspartate 95, asparagine 97, aspartate 99, methionine 101, glutamate 106, aspartate 131, asparagine 133, glutamate 135, serine 137, and aspartate 142.

The polypeptide is Calcium-binding protein I (cbpI) (Dictyostelium discoideum (Social amoeba)).